The following is a 434-amino-acid chain: Trigger factor (434 aa).

The 86-residue stretch at 160–245 (GDKAKINFVG…LNEVQAANLP (86 aa)) folds into the PPIase FKBP-type domain.

The protein belongs to the FKBP-type PPIase family. Tig subfamily.

It localises to the cytoplasm. The enzyme catalyses [protein]-peptidylproline (omega=180) = [protein]-peptidylproline (omega=0). Involved in protein export. Acts as a chaperone by maintaining the newly synthesized protein in an open conformation. Functions as a peptidyl-prolyl cis-trans isomerase. This chain is Trigger factor, found in Shewanella halifaxensis (strain HAW-EB4).